A 484-amino-acid chain; its full sequence is ETS translocation variant 4 (484 aa).

A Glycyl lysine isopeptide (Lys-Gly) (interchain with G-Cter in SUMO2) cross-link involves residue Lys6. Positions 90-115 (SPTTRIKKEPQSPRTDPALSCSRKPP) are disordered. A Glycyl lysine isopeptide (Lys-Gly) (interchain with G-Cter in SUMO) cross-link involves residue Lys96. Ser101 carries the phosphoserine modification. Lys139 is covalently cross-linked (Glycyl lysine isopeptide (Lys-Gly) (interchain with G-Cter in SUMO2)). Residues Ser140, Ser149, and Ser214 each carry the phosphoserine modification. Residues Lys226 and Lys260 each participate in a glycyl lysine isopeptide (Lys-Gly) (interchain with G-Cter in SUMO) cross-link. A Glycyl lysine isopeptide (Lys-Gly) (interchain with G-Cter in SUMO2) cross-link involves residue Lys322. The segment at residues 341–421 (LQLWQFLVAL…AGERYVYKFV (81 aa)) is a DNA-binding region (ETS).

The protein belongs to the ETS family. In terms of processing, sumoylated; enhanced upon ERK/MAP kinase pathway activation, it positively regulates the transcriptional activator capacity. Sumoylation at Lys-96 probably requires phosphorylation at Ser-101. Transiently polysumoylated and desumoylated by SENP1. Sumoylation is a prerequisite to polyubiquitination which in turn increases proteasomal-mediated degradation. Probably polyubiquitinated by RNF4 and deubiquitinated by USP2. Expressed in keratinocytes.

It is found in the nucleus. In terms of biological role, transcriptional activator. May play a role in keratinocyte differentiation. Functionally, (Microbial infection) Binds to the enhancer of the adenovirus E1A gene and acts as a transcriptional activator; the core-binding sequence is 5'-[AC]GGA[AT]GT-3'. The protein is ETS translocation variant 4 (ETV4) of Homo sapiens (Human).